A 387-amino-acid chain; its full sequence is 3-ketoacyl-CoA thiolase (387 aa).

Catalysis depends on Cys91, which acts as the Acyl-thioester intermediate. Active-site proton acceptor residues include His343 and Cys373.

It belongs to the thiolase-like superfamily. Thiolase family. In terms of assembly, heterotetramer of two alpha chains (FadB) and two beta chains (FadA).

It is found in the cytoplasm. It carries out the reaction an acyl-CoA + acetyl-CoA = a 3-oxoacyl-CoA + CoA. Its pathway is lipid metabolism; fatty acid beta-oxidation. Its function is as follows. Catalyzes the final step of fatty acid oxidation in which acetyl-CoA is released and the CoA ester of a fatty acid two carbons shorter is formed. The sequence is that of 3-ketoacyl-CoA thiolase from Shewanella sp. (strain MR-7).